The sequence spans 546 residues: Interleukin-20 receptor subunit alpha (546 aa).

The first 32 residues, 1–32, serve as a signal peptide directing secretion; sequence MHTPGTPAPGHPDPPPLLLLTLLLLLAASGRA. Over 33-253 the chain is Extracellular; it reads VPCVFCGLPK…EVQTSAWKAK (221 aa). 2 Fibronectin type-III domains span residues 42-138 and 139-245; these read KPTN…FLET and QVSP…TLEV. N-linked (GlcNAc...) asparagine glycosylation is found at Asn-45, Asn-86, Asn-94, Asn-185, and Asn-203. A disulfide bridge connects residues Cys-90 and Cys-98. Cys-218 and Cys-239 form a disulfide bridge. A helical transmembrane segment spans residues 254 to 274; the sequence is VIFWYVFLTSVIVFLFSAIGY. At 275–546 the chain is on the cytoplasmic side; sequence LVYRYIHVGK…EWGLHVQMES (272 aa).

Belongs to the type II cytokine receptor family. As to quaternary structure, heterodimer with IL20RB and heterodimer with IL10RB.

The protein resides in the membrane. In terms of biological role, the IL20RA/IL20RB dimer is a receptor for IL19, IL20 and IL24. The IL20RA/IL10RB dimer is a receptor for IL26. This chain is Interleukin-20 receptor subunit alpha (Il20ra), found in Mus musculus (Mouse).